The following is a 300-amino-acid chain: Probable protein phosphatase 2C 2 (300 aa).

A PPM-type phosphatase domain is found at 23 to 298 (IFAASEMQGW…DNMTTILVYL (276 aa)). The Mn(2+) site is built by aspartate 57, glycine 58, aspartate 237, and aspartate 289.

The protein belongs to the PP2C family. Mg(2+) is required as a cofactor. Mn(2+) serves as cofactor.

Its subcellular location is the membrane. The catalysed reaction is O-phospho-L-seryl-[protein] + H2O = L-seryl-[protein] + phosphate. It catalyses the reaction O-phospho-L-threonyl-[protein] + H2O = L-threonyl-[protein] + phosphate. Enzyme with a broad specificity. The sequence is that of Probable protein phosphatase 2C 2 from Paramecium tetraurelia.